The chain runs to 350 residues: Putative ATP-binding protein BRA0745/BS1330_II0738 (350 aa).

An ABC transporter domain is found at 4-234 (VSLRGISKTF…PANKFVAGFI (231 aa)). 36–43 (GPSGCGKS) is an ATP binding site.

Belongs to the ABC transporter superfamily. In terms of assembly, the complex is composed of two ATP-binding proteins (BRA0745), two transmembrane proteins (BRA0749) and a solute-binding protein (BRA0748).

It is found in the cell inner membrane. Probably part of an ABC transporter complex. Probably responsible for energy coupling to the transport system. In Brucella suis biovar 1 (strain 1330), this protein is Putative ATP-binding protein BRA0745/BS1330_II0738.